The primary structure comprises 273 residues: Zinc finger protein 80 (273 aa).

2 consecutive C2H2-type zinc fingers follow at residues 49 to 71 (YKCK…QQIH) and 77 to 99 (YECQ…MRIH). A C2H2-type 3; atypical zinc finger spans residues 105 to 127 (CKCVECGKVFNRRSHLLCYRQIH). 4 C2H2-type zinc fingers span residues 133 to 155 (YECS…RVTH), 161 to 183 (FGCK…MKIH), 189 to 211 (CKCS…SMTH), and 217 to 239 (YECK…TRSH).

Belongs to the krueppel C2H2-type zinc-finger protein family.

It is found in the nucleus. Its function is as follows. May be involved in transcriptional regulation. This Homo sapiens (Human) protein is Zinc finger protein 80 (ZNF80).